Here is a 113-residue protein sequence, read N- to C-terminus: Urease subunit beta (113 aa).

Belongs to the urease beta subunit family. In terms of assembly, heterotrimer of UreA (gamma), UreB (beta) and UreC (alpha) subunits. Three heterotrimers associate to form the active enzyme.

It localises to the cytoplasm. The enzyme catalyses urea + 2 H2O + H(+) = hydrogencarbonate + 2 NH4(+). The protein operates within nitrogen metabolism; urea degradation; CO(2) and NH(3) from urea (urease route): step 1/1. The polypeptide is Urease subunit beta (Nitrosospira multiformis (strain ATCC 25196 / NCIMB 11849 / C 71)).